The chain runs to 345 residues: tRNA pseudouridine synthase B (345 aa).

Positions 1 to 33 are disordered; that stretch reads MGGNSQPHQEPRRVNNDPRAKQQKGNQVRRDRR. Over residues 9-20 the composition is skewed to basic and acidic residues; that stretch reads QEPRRVNNDPRA. Aspartate 72 functions as the Nucleophile in the catalytic mechanism.

This sequence belongs to the pseudouridine synthase TruB family. Type 1 subfamily.

It catalyses the reaction uridine(55) in tRNA = pseudouridine(55) in tRNA. Its function is as follows. Responsible for synthesis of pseudouridine from uracil-55 in the psi GC loop of transfer RNAs. In Bradyrhizobium diazoefficiens (strain JCM 10833 / BCRC 13528 / IAM 13628 / NBRC 14792 / USDA 110), this protein is tRNA pseudouridine synthase B.